Consider the following 396-residue polypeptide: Elongation factor Tu (396 aa).

A tr-type G domain is found at 10–206 (KPHVNVGTIG…ALDSYIPTPK (197 aa)). The interval 19-26 (GHVDHGKT) is G1. 19–26 (GHVDHGKT) serves as a coordination point for GTP. Threonine 26 is a binding site for Mg(2+). The G2 stretch occupies residues 60-64 (GITIS). Residues 81 to 84 (DCPG) are G3. GTP contacts are provided by residues 81–85 (DCPGH) and 136–139 (NKAD). Residues 136-139 (NKAD) form a G4 region. Positions 174 to 176 (SAL) are G5.

This sequence belongs to the TRAFAC class translation factor GTPase superfamily. Classic translation factor GTPase family. EF-Tu/EF-1A subfamily. In terms of assembly, monomer.

The protein resides in the cytoplasm. It catalyses the reaction GTP + H2O = GDP + phosphate + H(+). In terms of biological role, GTP hydrolase that promotes the GTP-dependent binding of aminoacyl-tRNA to the A-site of ribosomes during protein biosynthesis. This chain is Elongation factor Tu, found in Vesicomyosocius okutanii subsp. Calyptogena okutanii (strain HA).